The sequence spans 152 residues: SsrA-binding protein (152 aa).

The protein belongs to the SmpB family.

It localises to the cytoplasm. Functionally, required for rescue of stalled ribosomes mediated by trans-translation. Binds to transfer-messenger RNA (tmRNA), required for stable association of tmRNA with ribosomes. tmRNA and SmpB together mimic tRNA shape, replacing the anticodon stem-loop with SmpB. tmRNA is encoded by the ssrA gene; the 2 termini fold to resemble tRNA(Ala) and it encodes a 'tag peptide', a short internal open reading frame. During trans-translation Ala-aminoacylated tmRNA acts like a tRNA, entering the A-site of stalled ribosomes, displacing the stalled mRNA. The ribosome then switches to translate the ORF on the tmRNA; the nascent peptide is terminated with the 'tag peptide' encoded by the tmRNA and targeted for degradation. The ribosome is freed to recommence translation, which seems to be the essential function of trans-translation. The sequence is that of SsrA-binding protein from Rickettsia conorii (strain ATCC VR-613 / Malish 7).